Consider the following 719-residue polypeptide: MIVTFLLEIGTEELPANFVYEAIQQWQELIPMTLKEAFLTNDSVNVYATPRRLAVVIDALPTKQPDREEEIKGPPAKAAFKDGKPTKAAEGFSKKQGVQLNDLQICTTEKGDFVFVNKKIQGKPTAAILTELIPKWIDKLEGKRFMRWADGELKFPRPIRWLVALLDDEILPINLDNGSQKITSDRFSYGHRVLHPKLIEISQAKNYVEVLKKAYIEVDYKQRKSKIEQQIKTAAEEIKGKAEISEELLAEVTNLVEWPTVVIGKFDEEFLILPGEVTTTVMETHQRYFPVFKSTKTFKDMELLPYFITISNGDPEKSEIIAIGNERVIKARLADGQFFYKTDLAKPLESYLPELETVTFQAKLGSMREKVKRIVSIAKLIAGQLQITQEESKNIERAALLCKADLVTQMVYEFPELQGVMGEKYARAAGETEAVATAIFEHYLPRGAGDILPKTISGQVISLADRLDTLVSIFGLGMLPTGSADPFALRRAANGVVNISWSANLPLNLHQLLEEIATNFFKTYSQTNSDLLAQLSNFLLQRIKTILLEEKNIDYDLVNAVLGDNDAEYKERGLKDLLDVRNRAIFLQNIRQNGMLGKIYETINRSTRLAAQGELDKIQLKPLKVIDSKLFKSESELAFYNALVELVPQTEISQKTRNYQQLVDALLKIAPTVSNFFDGPDSVLVIDPDPKIKKNRLNLLGLLRNNARVLADFGQIVKN.

Positions 65-84 (PDREEEIKGPPAKAAFKDGK) are disordered.

The protein belongs to the class-II aminoacyl-tRNA synthetase family. As to quaternary structure, tetramer of two alpha and two beta subunits.

It localises to the cytoplasm. It carries out the reaction tRNA(Gly) + glycine + ATP = glycyl-tRNA(Gly) + AMP + diphosphate. This chain is Glycine--tRNA ligase beta subunit, found in Trichodesmium erythraeum (strain IMS101).